We begin with the raw amino-acid sequence, 435 residues long: Bud site selection protein RAX1 (435 aa).

At 1 to 297 (MKEELSKVSS…PFSNHTSISR (297 aa)) the chain is on the cytoplasmic side. Residues 159–248 (VDEIMKRRSQ…LEMDCFPKFL (90 aa)) form the RGS domain. S167 carries the post-translational modification Phosphoserine. Residues 298-318 (IGFGLLWLGIGFWIGYVLIFL) form a helical membrane-spanning segment. The Extracellular portion of the chain corresponds to 319-325 (AYSRAIR). A helical membrane pass occupies residues 326–346 (VVTVVPFTLGCYCIVCGMYQV). Over 347-409 (DIVYSWFGVT…FTRQLLRKRG (63 aa)) the chain is Cytoplasmic. A helical transmembrane segment spans residues 410-430 (LWCLLLVVGATAAFTVIFSCV). Over 431–435 (PGRRV) the chain is Extracellular.

In terms of assembly, forms an heterodimeric complex with RAX2. Also interacts with BUD8 and BUD9.

It is found in the cell membrane. The protein localises to the bud neck. It localises to the bud tip. Functionally, required for the establishment of the bipolar budding pattern. Involved in selecting bud sites at both the distal and proximal poles of daughter cells as well as near previously used division sites on mother cells. The RAX1-RAX2 complex performs the asymmetric localization of the two cortical landmarks, BUD8 and BUD9, at the distal and proximal poles, respectively. This Saccharomyces cerevisiae (strain ATCC 204508 / S288c) (Baker's yeast) protein is Bud site selection protein RAX1.